We begin with the raw amino-acid sequence, 372 residues long: GRASP65 homolog protein 1 (372 aa).

N-acetylmethionine is present on Met1. 2 consecutive PDZ GRASP-type domains span residues 66 to 183 (SGLR…WTPL) and 188 to 276 (FTYH…YGFL). The segment at 66–292 (SGLRIVWVDE…KHCPQQAQQQ (227 aa)) is GRASP. At Ser155 the chain carries Phosphoserine. Residues 312–372 (VPSAFTAPPV…PPPQKQSSSD (61 aa)) are disordered.

Homodimer. Interacts with BUG1 (via C-terminus), probably forming a heterooligomer consisting of a GRH1 dimer and a BUG1 dimer. Interacts with COPII coat components SEC23, SEC24, SFB2 and SFB3. Post-translationally, N-terminal acetylation; by N-terminal acetyltransferase NatC.

It is found in the cytoplasm. It localises to the golgi apparatus. The protein localises to the cis-Golgi network membrane. In terms of biological role, involved in the spindle assembly checkpoint. Involved in ER to Golgi vesicle-mediated transport by either facilitating USO1-dependent and -independent tethering or increasing target accuracy of fusion events of COPII-coated vesicles. In Saccharomyces cerevisiae (strain ATCC 204508 / S288c) (Baker's yeast), this protein is GRASP65 homolog protein 1 (GRH1).